The sequence spans 51 residues: Large ribosomal subunit protein eL39 (51 aa).

It belongs to the eukaryotic ribosomal protein eL39 family.

This is Large ribosomal subunit protein eL39 from Pyrobaculum neutrophilum (strain DSM 2338 / JCM 9278 / NBRC 100436 / V24Sta) (Thermoproteus neutrophilus).